Consider the following 968-residue polypeptide: MDDSEVESTASILASVKEQEAQFEKLTRALEEERRHVSAQLERVRVSPQDANPLMANGTLTRRHQNGRFVGDADLERQKFSDLKLNGPQDHSHLLYSTIPRMQEPGQIVETYTEEDPEGAMSVVSVETSDDGTTRRTETTVKKVVKTVTTRTVQPVAMGPDGLPVDASSVSNNYIQTLGRDFRKNGNGGPGPYVGQAGTATLPRNFHYPPDGYSRHYEDGYPGGSDNYGSLSRVTRIEERYRPSMEGYRAPSRQDVYGPQPQVRVGGSSVDLHRFHPEPYGLEDDQRSMGYDDLDYGMMSDYGTARRTGTPSDPRRRLRSYEDMIGEEVPSDQYYWAPLAQHERGSLASLDSLRKGGPPPPNWRQPELPEVIAMLGFRLDAVKSNAAAYLQHLCYRNDKVKTDVRKLKGIPVLVGLLDHPKKEVHLGACGALKNISFGRDQDNKIAIKNCDGVPALVRLLRKARDMDLTEVITGTLWNLSSHDSIKMEIVDHALHALTDEVIIPHSGWEREPNEDCKPRHIEWESVLTNTAGCLRNVSSERSEARRKLRECDGLVDALIFIVQAEIGQKDSDSKLVENCVCLLRNLSYQVHREIPQAERYQEAAPNVANNTGPHAASCFGAKKGKDEWFSRGKKPIEDPANDTVDFPKRTSPARGYELLFQPEVVRIYISLLKESKTPAILEASAGAIQNLCAGRWTYGRYIRSALRQEKALSAIADLLTNEHERVVKAASGALRNLAVDARNKELIGKHAIPNLVKNLPGGQQNSSWNFSEDTVISILNTINEVIAENLEAAKKLRETQGIEKLVLINKSGNRSEKEVRAAALVLQTIWGYKELRKPLEKEGWKKSDFQVNLNNASRSQSSHSYDDSTLPLIDRNQKSDKKPDREEIQMSNMGSNTKSLDNNYSTPNERGDHNRTLDRSGDLGDMEPLKGTTPLMQDEGQESLEEELDVLVLDDEGGQVSYPSMQKI.

Residue Met1 is modified to N-acetylmethionine. The tract at residues 1–357 is necessary and sufficient for interaction with CCDC85B; it reads MDDSEVESTA…ASLDSLRKGG (357 aa). The residue at position 4 (Ser4) is a Phosphoserine. Positions 10–46 form a coiled coil; that stretch reads ASILASVKEQEAQFEKLTRALEEERRHVSAQLERVRV. Position 47 is a phosphoserine (Ser47). A Phosphothreonine modification is found at Thr59. Residue Tyr112 is modified to Phosphotyrosine; by FYN. Ser125 bears the Phosphoserine mark. Phosphotyrosine occurs at positions 217 and 221. Phosphoserine is present on Ser225. At Tyr228 the chain carries Phosphotyrosine. A phosphoserine mark is found at Ser230 and Ser252. At Tyr257 the chain carries Phosphotyrosine. Phosphoserine occurs at positions 268 and 269. Residue Tyr280 is modified to Phosphotyrosine. Ser288 carries the phosphoserine; by PAK5 modification. A Phosphotyrosine modification is found at Tyr291. A Nuclear localization signal (NLS) motif is present at residues 299-306; that stretch reads MSDYGTAR. Ser300 bears the Phosphoserine mark. Thr304 carries the post-translational modification Phosphothreonine. Phosphoserine occurs at positions 320, 346, 349, and 352. ARM repeat units follow at residues 358–395, 398–437, 441–475, and 476–516; these read PPPP…HLCY, DKVK…NISF, QDNK…ITGT, and LWNL…NEDC. Residue Lys421 forms a Glycyl lysine isopeptide (Lys-Gly) (interchain with G-Cter in SUMO2) linkage. Lys517 participates in a covalent cross-link: Glycyl lysine isopeptide (Lys-Gly) (interchain with G-Cter in SUMO2). The Nuclear localization signal (NLS) motif lies at 521-528; that stretch reads IEWESVLT. ARM repeat units lie at residues 534 to 573, 583 to 624, 653 to 693, 700 to 739, 740 to 780, and 781 to 826; these read LRNV…DSDS, LRNL…AKKG, ARGY…NLCA, RYIR…NLAV, DARN…SILN, and TINE…ALVL. Ile566, Asp572, Ser587, and Glu593 each carry phosphothreonine. A Nuclear localization signal (NLS) motif is present at residues 568 to 575; it reads QKDSDSKL. Ser617 carries the phosphoserine modification. The short motif at 622 to 629 is the Nuclear localization signal (NLS) element; it reads KKGKDEWF. Ser713 is modified (phosphoserine). Phosphothreonine occurs at positions 788, 794, and 809. Ser811 carries the phosphoserine modification. Phosphothreonine is present on residues Ser815, Leu835, and Lys841. Ser847 is modified (phosphoserine). The tract at residues 855-944 is disordered; that stretch reads NASRSQSSHS…LMQDEGQESL (90 aa). Ala856 bears the Phosphothreonine mark. Ser857, Ser859, and Ser861 each carry phosphoserine. Ser862 carries the phosphothreonine modification. At Ser864 the chain carries Phosphoserine. Position 865 is a phosphotyrosine (Tyr865). Ser868 carries the phosphoserine modification. Position 869 is a phosphothreonine (Thr869). Residues 875-888 are compositionally biased toward basic and acidic residues; the sequence is RNQKSDKKPDREEI. Ser879 carries the phosphoserine modification. Lys882 participates in a covalent cross-link: Glycyl lysine isopeptide (Lys-Gly) (interchain with G-Cter in SUMO2). A phosphothreonine mark is found at Gln889 and Ser895. Positions 889-908 are enriched in polar residues; that stretch reads QMSNMGSNTKSLDNNYSTPN. Ser899 is modified (phosphoserine). Tyr904 is modified (phosphotyrosine). A phosphothreonine mark is found at Thr906, Arg910, and Thr916. Residues 909-922 are compositionally biased toward basic and acidic residues; sequence ERGDHNRTLDRSGD. Residues Ser920 and Ser943 each carry the phosphoserine modification.

The protein belongs to the beta-catenin family. In terms of assembly, belongs to a multiprotein cell-cell adhesion complex that also contains E-cadherin/CDH1, alpha-catenin/CTNNA1, beta-catenin/CTNNB1, and gamma-catenin/JUP. Component of a cadherin:catenin adhesion complex composed of at least of CDH26, beta-catenin/CTNNB1, alpha-catenin/CTNNA1 and p120 catenin/CTNND1. Binds to the C-terminal fragment of PSEN1 and mutually competes for CDH1. Interacts with ZBTB33. Interacts with GLIS2. Interacts with FER. Interacts with NANOS1 (via N-terminal region). Interacts (via N-terminus) with GNA12; the interaction regulates CDH1-mediated cell-cell adhesion. Interacts with GNA13. Interacts with CCDC85B. Interacts with PLPP3; negatively regulates the PLPP3-mediated stabilization of CTNNB1. Interacts with DSG3; the interaction facilitates DSG3 localization and retention at cell-cell junctions. Interacts with CTNND1/p120-catenin; the interaction controls CADH5 endocytosis. In terms of processing, phosphorylated by FER and other protein-tyrosine kinases. Phosphorylated at Ser-288 by PAK5. Dephosphorylated by PTPRJ. Expressed in vascular endothelium. Melanocytes and melanoma cells primarily express the long isoform 1A, whereas keratinocytes express shorter isoforms, especially 3A. The shortest isoform 4A, is detected in normal keratinocytes and melanocytes, and generally lost from cells derived from squamous cell carcinomas or melanomas. The C-terminal alternatively spliced exon B is present in the p120ctn transcripts in the colon, intestine and prostate, but lost in several tumor tissues derived from these organs.

Its subcellular location is the cell junction. It localises to the adherens junction. It is found in the cytoplasm. The protein resides in the nucleus. The protein localises to the cell membrane. Its function is as follows. Key regulator of cell-cell adhesion that associates with and regulates the cell adhesion properties of both C-, E- and N-cadherins, being critical for their surface stability. Promotes localization and retention of DSG3 at cell-cell junctions, via its interaction with DSG3. Beside cell-cell adhesion, regulates gene transcription through several transcription factors including ZBTB33/Kaiso2 and GLIS2, and the activity of Rho family GTPases and downstream cytoskeletal dynamics. Implicated both in cell transformation by SRC and in ligand-induced receptor signaling through the EGF, PDGF, CSF-1 and ERBB2 receptors. This chain is Catenin delta-1, found in Homo sapiens (Human).